A 338-amino-acid chain; its full sequence is Glycerol-3-phosphate dehydrogenase [NAD(P)+] (338 aa).

4 residues coordinate NADPH: Ser14, Tyr15, His35, and Lys109. 3 residues coordinate sn-glycerol 3-phosphate: Lys109, Gly138, and Thr140. Ala142 is a binding site for NADPH. Sn-glycerol 3-phosphate is bound by residues Lys194, Asp247, Ser257, Arg258, and Asn259. Catalysis depends on Lys194, which acts as the Proton acceptor. Arg258 is an NADPH binding site. Residues Val282 and Glu284 each contribute to the NADPH site.

The protein belongs to the NAD-dependent glycerol-3-phosphate dehydrogenase family.

It is found in the cytoplasm. It catalyses the reaction sn-glycerol 3-phosphate + NAD(+) = dihydroxyacetone phosphate + NADH + H(+). The catalysed reaction is sn-glycerol 3-phosphate + NADP(+) = dihydroxyacetone phosphate + NADPH + H(+). Its pathway is membrane lipid metabolism; glycerophospholipid metabolism. In terms of biological role, catalyzes the reduction of the glycolytic intermediate dihydroxyacetone phosphate (DHAP) to sn-glycerol 3-phosphate (G3P), the key precursor for phospholipid synthesis. The polypeptide is Glycerol-3-phosphate dehydrogenase [NAD(P)+] (Sodalis glossinidius (strain morsitans)).